A 134-amino-acid chain; its full sequence is Antifungal protein ginkbilobin-2 (134 aa).

Positions 1-26 (MKTMRMNSAFILAFALAAAMLILTEA) are cleaved as a signal peptide. A Gnk2-homologous domain is found at 29-134 (TAFVSSACNT…CFIQYEQRSF (106 aa)). Intrachain disulfides connect cysteine 36–cysteine 112, cysteine 88–cysteine 97, and cysteine 100–cysteine 125. An alpha-D-mannopyranose-binding site is contributed by asparagine 37. Residues arginine 119 and glutamate 130 each coordinate alpha-D-mannopyranose.

In terms of assembly, binds actin in vitro.

It localises to the secreted. Possesses antifungal activity against F.oxysporum, T.reesei and C.albicans. Weakly inhibits the aspartic acid protease pepsin activity. Exerts antifungal activity against S.cerevisiae and F.culmorum through its carbohydrate-binding specificity. Acts as a lectin that stricly recognizes alpha-1,2-linked mannose moieties and interacts with the yeast cell wall mannan polysaccharide. Can interfere with the fungal actin remodeling resulting to the activation of an actin-dependent cell death. The protein is Antifungal protein ginkbilobin-2 of Ginkgo biloba (Ginkgo).